Consider the following 471-residue polypeptide: Heparan-sulfate 6-O-sulfotransferase 3 (471 aa).

The Cytoplasmic segment spans residues 1 to 4 (MDER). Residues 5 to 27 (FNKWLLTPVLTLLFVVIMYQYVS) traverse the membrane as a helical; Signal-anchor for type II membrane protein segment. Over 28–471 (PSCTSSCTNF…EDYNSQVVRW (444 aa)) the chain is Lumenal. The tract at residues 39 to 122 (EQPRAGEAGP…EAPENGSLPR (84 aa)) is disordered. The span at 41–62 (PRAGEAGPPAVPGPARRAQAPP) shows a compositional bias: low complexity. Residues 70–81 (QLPPPPRGPPEG) are compositionally biased toward pro residues. The span at 88 to 114 (PEEEDEEPGDPREGEEEEEEDEPDPEA) shows a compositional bias: acidic residues. N-linked (GlcNAc...) asparagine glycans are attached at residues N117 and N128. 152–160 (HIQKTGGTT) contacts 3'-phosphoadenylyl sulfate. Substrate contacts are provided by residues 182–183 (KK), R199, W204, and H209. H209 serves as the catalytic Proton acceptor. Residue N231 is glycosylated (N-linked (GlcNAc...) asparagine). 3'-phosphoadenylyl sulfate is bound by residues R245 and S253. The substrate site is built by H257 and W264. 2 N-linked (GlcNAc...) asparagine glycosylation sites follow: N324 and N329. 377–379 (TQF) lines the 3'-phosphoadenylyl sulfate pocket. The N-linked (GlcNAc...) asparagine glycan is linked to N380. 383–384 (RA) contributes to the 3'-phosphoadenylyl sulfate binding site. The tract at residues 422–471 (TKQLEHQRDRQKRREERRLQREHRDHQWPKEDGAAEGTVTEDYNSQVVRW) is disordered. Over residues 423 to 454 (KQLEHQRDRQKRREERRLQREHRDHQWPKEDG) the composition is skewed to basic and acidic residues. Residues 462–471 (EDYNSQVVRW) show a composition bias toward polar residues.

It belongs to the sulfotransferase 6 family.

The protein localises to the membrane. The enzyme catalyses alpha-D-glucosaminyl-[heparan sulfate](n) + 3'-phosphoadenylyl sulfate = 6-sulfo-alpha-D-glucosaminyl-[heparan sulfate](n) + adenosine 3',5'-bisphosphate + H(+). Functionally, 6-O-sulfation enzyme which catalyzes the transfer of sulfate from 3'-phosphoadenosine 5'-phosphosulfate (PAPS) to position 6 of the N-sulfoglucosamine residue (GlcNS) of heparan sulfate. In Homo sapiens (Human), this protein is Heparan-sulfate 6-O-sulfotransferase 3 (HS6ST3).